Reading from the N-terminus, the 742-residue chain is NAD(P)H-quinone oxidoreductase subunit 5, chloroplastic (742 aa).

16 helical membrane passes run 9-29 (WIIPLLPLPVTMSIGFGLLLI), 40-60 (WAFPSVLLLSIGLIFSANLAF), 89-109 (IDPLTSVMLILITTVGIMVLI), 125-145 (FAYMSFFNASMLGLVTSSNLI), 147-167 (IYIFWELVGMCSYLLIGFWFT), 185-205 (GDFGLLLGILGFYWITGSFEF), 228-248 (AFLLFLGAIAKSAQFPLHVWL), 256-276 (TPISALIHAATMVAAGIFLVA), 288-308 (IMNIISLIGVITLLLGATLAL), 325-345 (LGYIMLALGLGSYRAALFHLI), 352-372 (ALLFLGSGSIIHSMEPLVGYS), 394-414 (TTFLLGTLSLCGIPPLACFWS), 423-443 (WLYSPSFAVIAYFTAGLTAFY), 544-564 (YPLLILVVFTLFVGFIGIPLV), 599-619 (FFINASFSVSIATGGIFLAFI), and 720-740 (ISFYLFFYLFFILIFVYFLFL).

The protein belongs to the complex I subunit 5 family. In terms of assembly, NDH is composed of at least 16 different subunits, 5 of which are encoded in the nucleus.

Its subcellular location is the plastid. It is found in the chloroplast thylakoid membrane. It carries out the reaction a plastoquinone + NADH + (n+1) H(+)(in) = a plastoquinol + NAD(+) + n H(+)(out). It catalyses the reaction a plastoquinone + NADPH + (n+1) H(+)(in) = a plastoquinol + NADP(+) + n H(+)(out). Functionally, NDH shuttles electrons from NAD(P)H:plastoquinone, via FMN and iron-sulfur (Fe-S) centers, to quinones in the photosynthetic chain and possibly in a chloroplast respiratory chain. The immediate electron acceptor for the enzyme in this species is believed to be plastoquinone. Couples the redox reaction to proton translocation, and thus conserves the redox energy in a proton gradient. The chain is NAD(P)H-quinone oxidoreductase subunit 5, chloroplastic (ndhF) from Lemna minor (Common duckweed).